The chain runs to 602 residues: RNA-binding NOB1-like protein (602 aa).

Positions 1 to 25 (MDPKPTSMWSSIVKKDPPSKPPVND) are disordered. The region spanning 48 to 134 (VVDANAIIEG…LKLIALSYTL (87 aa)) is the PINc domain. Disordered regions lie at residues 258 to 278 (SQGQ…VSRS) and 301 to 331 (IQKD…GEDI). The span at 301–329 (IQKDQEADKARHTKEANETHAKDSGKNGE) shows a compositional bias: basic and acidic residues. Residues 331–365 (ISSILKDMRLEEESLRALQEETEETNAEATLINGE) are a coiled coil. Residues 452-522 (IRQLHRWILK…QYSIPMPKGG (71 aa)) form an NOB1 zinc finger. The Zn(2+) site is built by cysteine 462, cysteine 465, cysteine 477, and cysteine 480.

The protein belongs to the NOB1 family. Component of the small ribosomal subunit, ribosomal RNA processing complex (SSU RRP complex). In terms of tissue distribution, highly expressed in flowers and siliques and at lower levels in roots, hypocotyls, stems, leaves and seeds.

Its subcellular location is the nucleus. It localises to the nucleoplasm. It is found in the cytoplasm. Functionally, essential protein required during embryogenesis and pollen development. Endonuclease cleaving pre-rRNA at the 3' end of the mature 18S rRNA (D-site); cleaves 20S pre-rRNA in the cytoplasm. Required for processing of 20S pre-rRNA precursor and biogenesis of 40S ribosomal subunits. This chain is RNA-binding NOB1-like protein, found in Arabidopsis thaliana (Mouse-ear cress).